We begin with the raw amino-acid sequence, 244 residues long: Small ribosomal subunit protein uS2 (244 aa).

It belongs to the universal ribosomal protein uS2 family.

In Psychromonas ingrahamii (strain DSM 17664 / CCUG 51855 / 37), this protein is Small ribosomal subunit protein uS2.